A 921-amino-acid chain; its full sequence is GPI ethanolamine phosphate transferase 1 (921 aa).

Over 1–9 (MKNNTRFTL) the chain is Cytoplasmic. A helical membrane pass occupies residues 10–30 (IVVGVLFHLLYLWSIFDIYFI). At 31 to 457 (SPLVHGMEQK…TTYNWRFIRT (427 aa)) the chain is on the lumenal side. Asparagine 90, asparagine 138, asparagine 198, asparagine 262, and asparagine 286 each carry an N-linked (GlcNAc...) asparagine glycan. The chain crosses the membrane as a helical span at residues 458-478 (IVTFGFLGWICYSFMIFLKLF). Over 479–488 (ILNNSQTTHP) the chain is Cytoplasmic. The chain crosses the membrane as a helical span at residues 489 to 509 (SILNISIFTSLGLILNYILFY). Topologically, residues 510–516 (QKSPLNF) are lumenal. Residues 517-537 (YLYLIFPLFFWSKIFSNTAII) traverse the membrane as a helical segment. Over 538–552 (RDGVNEFFKGISKAE) the chain is Cytoplasmic. A helical transmembrane segment spans residues 553 to 573 (SVIIGLTIISIYEGIVYGFFH). Residues 574–575 (RW) lie on the Lumenal side of the membrane. Residues 576–596 (ILSLILVSFAFYPLVCGVTDL) form a helical membrane-spanning segment. Residues 597-599 (FTN) are Cytoplasmic-facing. The chain crosses the membrane as a helical span at residues 600–620 (LLWILTSVGLSSFTLLDAVKI). Glutamate 621 is a topological domain (lumenal). The chain crosses the membrane as a helical span at residues 622–642 (NLQQIQVAGILIVLSSAYAVM). At 643–654 (RLSQDISKYTQH) the chain is on the cytoplasmic side. The helical transmembrane segment at 655–675 (LLSIQIFLVSGMLHFTSKSVI) threads the bilayer. The Lumenal portion of the chain corresponds to 676-684 (SLQKREGLP). The chain crosses the membrane as a helical span at residues 685–705 (AFAQVGGWAILVISLTIMPFL). Residues 706-728 (HYLKPNNNYQVRLLTIYLTFAPS) lie on the Cytoplasmic side of the membrane. A helical transmembrane segment spans residues 729–749 (FIILSISFEALFYFIFTAYIV). Residues 750–777 (QWLQIEKNIKVLKDEQKSDSNGIQLLRV) lie on the Lumenal side of the membrane. The chain crosses the membrane as a helical span at residues 778–798 (AIIGFFLQQIAFFGTGNVASI). At 799–819 (SSFSLDSVYRLLPVFDPFPMG) the chain is on the cytoplasmic side. Residues 820 to 840 (ALLMLKLIIPYVLLSCGLGIM) traverse the membrane as a helical segment. Over 841–849 (NIQLDIKDY) the chain is Lumenal. A helical membrane pass occupies residues 850 to 870 (TISSLIISTSDILSLNFFYLL). Topologically, residues 871–878 (KTEGSWLD) are cytoplasmic. A helical membrane pass occupies residues 879-899 (IGVTISNYCLAILSSLFMLIL). At 900-921 (EIVGHQLLKNVTRATSSQKKTN) the chain is on the lumenal side. Asparagine 909 carries an N-linked (GlcNAc...) asparagine glycan.

This sequence belongs to the PIGG/PIGN/PIGO family. PIGN subfamily.

The protein localises to the endoplasmic reticulum membrane. It functions in the pathway glycolipid biosynthesis; glycosylphosphatidylinositol-anchor biosynthesis. In terms of biological role, ethanolamine phosphate transferase involved in glycosylphosphatidylinositol-anchor biosynthesis. Transfers ethanolamine phosphate to the first alpha-1,4-linked mannose of the glycosylphosphatidylinositol precursor of GPI-anchor. This is GPI ethanolamine phosphate transferase 1 (MCD4) from Candida glabrata (strain ATCC 2001 / BCRC 20586 / JCM 3761 / NBRC 0622 / NRRL Y-65 / CBS 138) (Yeast).